The primary structure comprises 1535 residues: Lysine-specific demethylase 5D (1535 aa).

The region spanning 14 to 55 (CPVFEPSWAEFQDPLGYIAKIRPIAEKSGICKIRPPADWQPP) is the JmjN domain. Positions 79–169 (TRVKLNYLDQ…IIYPYEMFQS (91 aa)) constitute an ARID domain. The interval 192-227 (PHSIPLRQSVQPSKFSSYSRRAKRLQPDPEPTEEDI) is disordered. Polar residues predominate over residues 197-210 (LRQSVQPSKFSSYS). Glycyl lysine isopeptide (Lys-Gly) (interchain with G-Cter in SUMO2) cross-links involve residues Lys-205, Lys-229, Lys-244, and Lys-272. Ser-291 and Ser-307 each carry phosphoserine. The segment at 314–364 (SYICQVCSRGDEDDKLLFCDGCDDNYHIFCLLPPLPEIPRGIWRCPKCILA) adopts a PHD-type 1 zinc-finger fold. 2-oxoglutarate is bound at residue Tyr-430. In terms of domain architecture, JmjC spans 458 to 624 (EYATSGWNLN…AGRQCIEHYR (167 aa)). The Fe cation site is built by His-504 and Glu-506. 2-oxoglutarate-binding residues include Ser-512, Asn-514, and Lys-522. His-592 is a binding site for Fe cation. Residues 697 to 749 (CIKCKTTCFLSALACYDCPDGLVCLSHINDLCKCSSSRQYLRYRYTLDELPTM) form a C5HC2 zinc finger. A Phosphoserine modification is found at Ser-884. The PHD-type 2 zinc finger occupies 1174-1235 (ICVCGQVPAG…DTKFLCPLCM (62 aa)). Phosphoserine is present on Ser-1342. The disordered stretch occupies residues 1425 to 1519 (HQGSRTRSRA…KDSGSSAACP (95 aa)). Residues 1428–1441 (SRTRSRALERRRRQ) show a composition bias toward basic residues. The span at 1473 to 1487 (GREEEHYQEKADREN) shows a compositional bias: basic and acidic residues. Positions 1490–1517 (LTPSTDHSPSLKGNQNSLQHKDSGSSAA) are enriched in polar residues.

It belongs to the JARID1 histone demethylase family. As to quaternary structure, interacts withPCGF6, MSH5, ZMYND8, AR. L-ascorbate is required as a cofactor. Fe(2+) serves as cofactor.

The protein localises to the nucleus. The enzyme catalyses N(6),N(6),N(6)-trimethyl-L-lysyl(4)-[histone H3] + 3 2-oxoglutarate + 3 O2 = L-lysyl(4)-[histone H3] + 3 formaldehyde + 3 succinate + 3 CO2. Its function is as follows. Histone demethylase that specifically demethylates 'Lys-4' of histone H3, thereby playing a central role in histone code. Does not demethylate histone H3 'Lys-9', H3 'Lys-27', H3 'Lys-36', H3 'Lys-79' or H4 'Lys-20'. Demethylates trimethylated and dimethylated but not monomethylated H3 'Lys-4'. May play a role in spermatogenesis. Involved in transcriptional repression of diverse metastasis-associated genes; in this function seems to cooperate with ZMYND8. Suppresses prostate cancer cell invasion. Regulates androgen receptor (AR) transcriptional activity by demethylating H3K4me3 active transcription marks. The polypeptide is Lysine-specific demethylase 5D (KDM5D) (Pan troglodytes (Chimpanzee)).